The sequence spans 394 residues: Elongation factor Tu (394 aa).

Residues 10-204 (KPHVNVGTIG…ALDSYIPEPE (195 aa)) form the tr-type G domain. The tract at residues 19–26 (GHVDHGKT) is G1. 19–26 (GHVDHGKT) contacts GTP. Residue threonine 26 participates in Mg(2+) binding. A G2 region spans residues 60-64 (GITIS). The interval 81–84 (DCPG) is G3. GTP-binding positions include 81-85 (DCPGH) and 136-139 (NKCD). Residues 136–139 (NKCD) are G4. Residues 174–176 (SAL) are G5.

This sequence belongs to the TRAFAC class translation factor GTPase superfamily. Classic translation factor GTPase family. EF-Tu/EF-1A subfamily. In terms of assembly, monomer.

Its subcellular location is the cytoplasm. The enzyme catalyses GTP + H2O = GDP + phosphate + H(+). Functionally, GTP hydrolase that promotes the GTP-dependent binding of aminoacyl-tRNA to the A-site of ribosomes during protein biosynthesis. The sequence is that of Elongation factor Tu from Alteromonas mediterranea (strain DSM 17117 / CIP 110805 / LMG 28347 / Deep ecotype).